A 235-amino-acid chain; its full sequence is Large ribosomal subunit protein uL1 (235 aa).

Belongs to the universal ribosomal protein uL1 family. In terms of assembly, part of the 50S ribosomal subunit.

Its function is as follows. Binds directly to 23S rRNA. The L1 stalk is quite mobile in the ribosome, and is involved in E site tRNA release. Protein L1 is also a translational repressor protein, it controls the translation of the L11 operon by binding to its mRNA. This chain is Large ribosomal subunit protein uL1, found in Prochlorococcus marinus (strain MIT 9312).